The chain runs to 1261 residues: Apoptotic protease-activating factor 1 (1261 aa).

Residues 1-90 (MEERARSRLL…GDLASLLHSD (90 aa)) form the CARD domain. The NB-ARC domain maps to 106–417 (VSPSVQAILS…LELEEVEDVL (312 aa)). 154–161 (GMAGSGKS) is an ATP binding site. WD repeat units lie at residues 615–654 (PHQGAVYYACFSKDGSKIASCGASKALRVFKSTSGEKLLE), 657–696 (AHEEDVLCCAFSPDDRHIATCASDRKVKLWNVERGVLIRE), 700–743 (EHEE…SQNT), 746–785 (GHMEPVNHCCFSPNDLYLATSSSDGSLKLFEVSSANEWKS), 798–836 (EIKAMVKCSTWSADGSQIICAARNTVFVFDVETSDLLLK), 840–879 (SRLSTIQFCHACPNSSLLAVALSHYTVELWNFESSKKKAE), 882–921 (GHLSWVHCVQFSPDGSLLLSSSDDQTIRLWETDRVHTSSA), 964–1003 (ELSSRIRCSCISRNAAFVALGSEDGTVQVIEVPSSKASVK), 1006–1045 (GHTKTVHHCQFTDDCEILITSSEDSTIRVWKWRTGECMVL), 1047–1088 (GHME…MLQD), 1091–1130 (CHEGAVLSCDVSSDGRLFATTSANRTAKVWSSASWKMLFL), 1133–1172 (GHKDCVRSCRFSWDNKRLATGDDNGEIRLWSMLDGALLKI), and 1184–1223 (YHAGWVTDLHFSPDNRVLVSTAGYIKWWSVESGEALQTFY).

Monomer. Oligomerizes upon binding of cytochrome c and dATP.

The protein resides in the cytoplasm. Its function is as follows. Oligomeric Apaf-1 mediates the cytochrome c-dependent autocatalytic activation of pro-caspase-9 (Apaf-3), leading to the activation of caspase-3 and apoptosis. This activation requires ATP. The sequence is that of Apoptotic protease-activating factor 1 (apaf1) from Danio rerio (Zebrafish).